A 477-amino-acid chain; its full sequence is Ribosomal RNA small subunit methyltransferase F (477 aa).

S-adenosyl-L-methionine contacts are provided by residues 125–131, E149, D176, and D194; that span reads AAAPGSK. Residue C247 is the Nucleophile of the active site.

It belongs to the class I-like SAM-binding methyltransferase superfamily. RsmB/NOP family.

It is found in the cytoplasm. It carries out the reaction cytidine(1407) in 16S rRNA + S-adenosyl-L-methionine = 5-methylcytidine(1407) in 16S rRNA + S-adenosyl-L-homocysteine + H(+). Its function is as follows. Specifically methylates the cytosine at position 1407 (m5C1407) of 16S rRNA. This chain is Ribosomal RNA small subunit methyltransferase F, found in Klebsiella pneumoniae (strain 342).